A 67-amino-acid polypeptide reads, in one-letter code: Large ribosomal subunit protein bL35 (67 aa).

Belongs to the bacterial ribosomal protein bL35 family.

This Leptospira interrogans serogroup Icterohaemorrhagiae serovar Lai (strain 56601) protein is Large ribosomal subunit protein bL35.